The chain runs to 510 residues: Hydroperoxide bicyclase CYP5164A3, mitochondrial (510 aa).

A mitochondrion-targeting transit peptide spans 1-31 (MQRVGAASPTCSSLQAPAAAPPILTISPHHR). Residue C452 participates in heme binding.

Belongs to the cytochrome P450 family. Requires heme as cofactor.

Its subcellular location is the mitochondrion. It carries out the reaction (13S)-hydroperoxy-(9Z,11E,15Z)-octadecatrienoate = plasmodiophorol A. It catalyses the reaction (13S)-hydroperoxy-(9Z,11E,15Z)-octadecatrienoate = plasmodiophorol B. The catalysed reaction is (13S)-hydroperoxy-(9Z,11E,15Z)-octadecatrienoate = ectocarpin A + H2O. The enzyme catalyses (15S)-hydroperoxy-(5Z,8Z,11Z,13E,17Z)-eicosapentaenoate = ectocarpin B + H2O. It carries out the reaction (15S)-hydroperoxy-(5Z,8Z,11Z,13E,17Z)-eicosapentaenoate = ectocarpin C. It catalyses the reaction (15S)-hydroperoxy-(5Z,8Z,11Z,13E,17Z)-eicosapentaenoate + H2O = ectocarpin D. The catalysed reaction is (15S)-hydroperoxy-(5Z,8Z,11Z,13E,17Z)-eicosapentaenoate = 14-oxo-15-hydroxy-(5Z,8Z,11Z,17Z)-eicosatetraenoate. Its pathway is lipid metabolism; oxylipin biosynthesis. Cytochrome P450 hydroperoxide bicyclase involved in the metabolism of oxylipins 'ectocarpins' natural products, such as hybridalactone, ecklonilactones and derivatives. Isomerizes the hydroperoxides into epoxyalcohols via epoxyallylic radical. Can use alpha-linolenic acid 13(S)-hydroperoxide (13-HPOTE) and eicosapentaenoic acid 15(S)-hydroperoxide (15-HPEPE) as preferred substrate to produce corresponding heterobicyclic oxylipins, such as plasmodiophorol A (6-oxabicyclo[3.1.0]hexane), plasmodiophorol B (2-oxabicyclo[2.2.1]heptane) and plasmodiophorol C (4-hydroxymethyl-1,2-dihydroxycyclopentane) as well as ectocarpin A (3-propenyl-6-oxabicyclo[3.1.0]hexane) formed at about 15:3:3:1 ratio for 13-HPOTE, and analogous to plasmodiophorols A and B including ectocarpin B (3-[(1'E)-propenyl]-6-oxabicyclo[3.1.0]hexane), ectocarpin C, 14-oxo-15-hydroxy-5,8,11,17-eicosate-traenoic acid and ectocarpin D for 15-HPEPE. Barely able to use linoleic acid 13-hydroperoxide (13-HPODE), linoleic acid 9-hydroperoxide (9-HPODE), eicosapentaenoic acid 15-hydroperoxide (15-HPEPE), and alpha-linolenic acid 9-hydroperoxide (9-HPOTE) as substrates. The sequence is that of Hydroperoxide bicyclase CYP5164A3, mitochondrial from Ectocarpus siliculosus (Brown alga).